The primary structure comprises 89 residues: Small ribosomal subunit protein uS15 (89 aa).

The protein belongs to the universal ribosomal protein uS15 family. As to quaternary structure, part of the 30S ribosomal subunit. Forms a bridge to the 50S subunit in the 70S ribosome, contacting the 23S rRNA.

One of the primary rRNA binding proteins, it binds directly to 16S rRNA where it helps nucleate assembly of the platform of the 30S subunit by binding and bridging several RNA helices of the 16S rRNA. In terms of biological role, forms an intersubunit bridge (bridge B4) with the 23S rRNA of the 50S subunit in the ribosome. This Acidithiobacillus ferrooxidans (strain ATCC 23270 / DSM 14882 / CIP 104768 / NCIMB 8455) (Ferrobacillus ferrooxidans (strain ATCC 23270)) protein is Small ribosomal subunit protein uS15.